We begin with the raw amino-acid sequence, 392 residues long: Formate-dependent phosphoribosylglycinamide formyltransferase (392 aa).

N(1)-(5-phospho-beta-D-ribosyl)glycinamide-binding positions include 22-23 (EL) and Glu-82. Residues Arg-114, Lys-155, 160–165 (SSGKGQ), 195–198 (EGVV), and Glu-203 contribute to the ATP site. The ATP-grasp domain maps to 119 to 308 (RLAAEELQLP…EFALHVRAFL (190 aa)). Residues Glu-267 and Glu-279 each contribute to the Mg(2+) site. Residues Asp-286, Lys-355, and 362–363 (RR) contribute to the N(1)-(5-phospho-beta-D-ribosyl)glycinamide site.

Belongs to the PurK/PurT family. As to quaternary structure, homodimer.

The enzyme catalyses N(1)-(5-phospho-beta-D-ribosyl)glycinamide + formate + ATP = N(2)-formyl-N(1)-(5-phospho-beta-D-ribosyl)glycinamide + ADP + phosphate + H(+). It participates in purine metabolism; IMP biosynthesis via de novo pathway; N(2)-formyl-N(1)-(5-phospho-D-ribosyl)glycinamide from N(1)-(5-phospho-D-ribosyl)glycinamide (formate route): step 1/1. Its function is as follows. Involved in the de novo purine biosynthesis. Catalyzes the transfer of formate to 5-phospho-ribosyl-glycinamide (GAR), producing 5-phospho-ribosyl-N-formylglycinamide (FGAR). Formate is provided by PurU via hydrolysis of 10-formyl-tetrahydrofolate. This Escherichia coli O157:H7 protein is Formate-dependent phosphoribosylglycinamide formyltransferase.